The following is a 289-amino-acid chain: WUSCHEL-related homeobox 1 (289 aa).

Residues 1 to 11 are compositionally biased toward low complexity; that stretch reads MDHMQQQQRQQ. Residues 1-34 are disordered; that stretch reads MDHMQQQQRQQVGGGGGEEVAGRGGVPVCRPSGT. Gly residues predominate over residues 12–25; it reads VGGGGGEEVAGRGG. The homeobox; WUS-type DNA-binding region spans 31–96; it reads PSGTRWTPTT…NHKARERQKK (66 aa).

This sequence belongs to the WUS homeobox family. As to quaternary structure, interacts with TPR1, TPR2 and TPR3. In terms of tissue distribution, expressed in young leaf primordia. Expressed in branch an floral meristems. Transiently expressed in the shoot apex.

It localises to the nucleus. In terms of biological role, transcription repressor required for the formation and development of tiller buds and panicles. Required for tiller formation and female sterility. Required for the early developmental stages of axillary meristem formation. Plays a role in maintaining the axillary premeristem zone and in promoting the formation of the axillary meristem by promoting OSH1 expression. Does not seem to be involved in maintenance of the shoot apical meristem (SAM). The sequence is that of WUSCHEL-related homeobox 1 from Oryza sativa subsp. japonica (Rice).